The sequence spans 568 residues: MFS-type efflux transporter phmH (568 aa).

Positions 1–11 are enriched in polar residues; sequence MVSGTDTTEVG. The disordered stretch occupies residues 1–39; that stretch reads MVSGTDTTEVGATTKAPPSEGTEGILDDHSSNSQPQAEK. A run of 7 helical transmembrane segments spans residues 45–65, 101–121, 134–154, 161–181, 199–219, 237–257, and 268–288; these read YPLS…VSAL, YVMI…GGSS, GIGA…LVPM, IGLL…VGGI, IFYI…LFLH, VIGN…LTYG, and IAAP…WEMS. Residue Asn303 is glycosylated (N-linked (GlcNAc...) asparagine). 6 helical membrane-spanning segments follow: residues 307–327, 344–364, 372–392, 399–419, 437–457, and 515–535; these read AAAF…NFFY, VYTL…GAIV, TVHL…SILD, EWVI…STTL, TWSF…AAIF, and IGIV…EIHL. N-linked (GlcNAc...) asparagine glycosylation occurs at Asn563.

Belongs to the major facilitator superfamily.

It localises to the cell membrane. MFS-type efflux transporter; part of the gene cluster that mediates the biosynthesis of thethe mycotoxins phomacins, leucine-derived cytochalasans with potent actin polymerization-inhibitory activities and monocot-specific antigerminative activities. PhmH might be involved in the excretion of phomacins. In Phaeosphaeria nodorum (strain SN15 / ATCC MYA-4574 / FGSC 10173) (Glume blotch fungus), this protein is MFS-type efflux transporter phmH.